The primary structure comprises 765 residues: 5-methyltetrahydropteroyltriglutamate--homocysteine methyltransferase (765 aa).

Residues Lys-18 and Asn-116 each coordinate 5-methyltetrahydropteroyltri-L-glutamate. L-homocysteine contacts are provided by residues Ile-437–Ser-439 and Glu-490. Residues Ile-437–Ser-439 and Glu-490 each bind L-methionine. 5-methyltetrahydropteroyltri-L-glutamate-binding positions include Asp-495, Tyr-518, Arg-521–Cys-522, and Trp-567. Residue Asp-605 coordinates L-homocysteine. L-methionine is bound at residue Asp-605. Zn(2+) contacts are provided by His-647, Cys-649, His-658, Asp-662, and Glu-671. The active-site Proton donor is His-701. Residue Cys-733 coordinates Zn(2+).

Belongs to the vitamin-B12 independent methionine synthase family. The cofactor is Zn(2+).

The protein resides in the cytoplasm. The enzyme catalyses 5-methyltetrahydropteroyltri-L-glutamate + L-homocysteine = tetrahydropteroyltri-L-glutamate + L-methionine. It participates in amino-acid biosynthesis; L-methionine biosynthesis via de novo pathway; L-methionine from L-homocysteine (MetE route): step 1/1. Functionally, catalyzes the transfer of a methyl group from 5-methyltetrahydrofolate to homocysteine resulting in methionine formation. In Mesembryanthemum crystallinum (Common ice plant), this protein is 5-methyltetrahydropteroyltriglutamate--homocysteine methyltransferase (METE).